The chain runs to 78 residues: Large ribosomal subunit protein bL28 (78 aa).

The interval 1 to 20 (MSRVCQVTGKGPVTGNNISH) is disordered.

The protein belongs to the bacterial ribosomal protein bL28 family.

In Stutzerimonas stutzeri (strain A1501) (Pseudomonas stutzeri), this protein is Large ribosomal subunit protein bL28.